Reading from the N-terminus, the 248-residue chain is Peptidyl-prolyl cis-trans isomerase, chloroplastic (248 aa).

The PPIase cyclophilin-type domain maps to 85-243; sequence FFDIEIGGES…KPCKIAKSGE (159 aa). The segment at 223–248 is disordered; that stretch reads QETSKLDNSPKKPCKIAKSGELPLDG.

Belongs to the cyclophilin-type PPIase family. Highly expressed in leaf.

Its subcellular location is the plastid. The protein resides in the chloroplast stroma. It carries out the reaction [protein]-peptidylproline (omega=180) = [protein]-peptidylproline (omega=0). Binds cyclosporin A (CsA). CsA mediates some of its effects via an inhibitory action on PPIase. PPIases accelerate the folding of proteins. It catalyzes the cis-trans isomerization of proline imidic peptide bonds in oligopeptides. The sequence is that of Peptidyl-prolyl cis-trans isomerase, chloroplastic from Vicia faba (Broad bean).